An 82-amino-acid chain; its full sequence is ATP synthase subunit c (82 aa).

2 helical membrane-spanning segments follow: residues 7–27 and 57–77; these read AASV…PGIG and FAFM…LLFA.

Belongs to the ATPase C chain family. F-type ATPases have 2 components, F(1) - the catalytic core - and F(0) - the membrane proton channel. F(1) has five subunits: alpha(3), beta(3), gamma(1), delta(1), epsilon(1). F(0) has four main subunits: a(1), b(1), b'(1) and c(10-14). The alpha and beta chains form an alternating ring which encloses part of the gamma chain. F(1) is attached to F(0) by a central stalk formed by the gamma and epsilon chains, while a peripheral stalk is formed by the delta, b and b' chains.

The protein resides in the cellular thylakoid membrane. Its function is as follows. F(1)F(0) ATP synthase produces ATP from ADP in the presence of a proton or sodium gradient. F-type ATPases consist of two structural domains, F(1) containing the extramembraneous catalytic core and F(0) containing the membrane proton channel, linked together by a central stalk and a peripheral stalk. During catalysis, ATP synthesis in the catalytic domain of F(1) is coupled via a rotary mechanism of the central stalk subunits to proton translocation. In terms of biological role, key component of the F(0) channel; it plays a direct role in translocation across the membrane. A homomeric c-ring of between 10-14 subunits forms the central stalk rotor element with the F(1) delta and epsilon subunits. The chain is ATP synthase subunit c from Prochlorococcus marinus (strain NATL1A).